A 235-amino-acid chain; its full sequence is Protocatechuate 3,4-dioxygenase beta chain (235 aa).

Positions 107, 146, 159, and 161 each coordinate Fe cation.

It belongs to the intradiol ring-cleavage dioxygenase family. In terms of assembly, the enzyme is an oligomer of 12 copies of the alpha and beta chains. Fe(3+) is required as a cofactor.

It carries out the reaction 3,4-dihydroxybenzoate + O2 = 3-carboxy-cis,cis-muconate + 2 H(+). The protein operates within aromatic compound metabolism; beta-ketoadipate pathway; 3-carboxy-cis,cis-muconate from 3,4-dihydroxybenzoate: step 1/1. Its function is as follows. Plays an essential role in the utilization of numerous aromatic and hydroaromatic compounds via the beta-ketoadipate pathway. This chain is Protocatechuate 3,4-dioxygenase beta chain (pcaH), found in Burkholderia cepacia (Pseudomonas cepacia).